Here is a 78-residue protein sequence, read N- to C-terminus: Dihydrofolate reductase type 2 (78 aa).

NADP(+)-binding positions include lysine 32 and 66-69 (VQIY). Position 68 (isoleucine 68) interacts with substrate.

Homotetramer.

The catalysed reaction is (6S)-5,6,7,8-tetrahydrofolate + NADP(+) = 7,8-dihydrofolate + NADPH + H(+). It functions in the pathway cofactor biosynthesis; tetrahydrofolate biosynthesis; 5,6,7,8-tetrahydrofolate from 7,8-dihydrofolate: step 1/1. Functionally, key enzyme in folate metabolism. Catalyzes an essential reaction for de novo glycine and purine synthesis, and for DNA precursor synthesis. This chain is Dihydrofolate reductase type 2, found in Escherichia coli.